Reading from the N-terminus, the 449-residue chain is Cytochrome P450 monooxygenase iliC (449 aa).

Residues 28-44 (TFAITFMGVKQICTIEG) form a helical membrane-spanning segment. Cys397 is a binding site for heme.

Belongs to the cytochrome P450 family. It depends on heme as a cofactor.

Its subcellular location is the membrane. It carries out the reaction (3E,5S)-3-[(2E,4E,8S,10E,12Z)-1-hydroxy-4,8-dimethyltetradeca-2,4,10,12-tetraen-1-ylidene]-5-[(4-hydroxyphenyl)methyl]pyrrolidine-2,4-dione + reduced [NADPH--hemoprotein reductase] + O2 = 3-[(2E,4E,8S,10E,12Z)-4,8-dimethyltetradeca-2,4,10,12-tetraenoyl]-4-hydroxy-5-(4-hydroxyphenyl)-1,2-dihydropyridin-2-one + oxidized [NADPH--hemoprotein reductase] + 2 H2O. Its pathway is mycotoxin biosynthesis. Its function is as follows. Cytochrome P450 monooxygenase; part of the gene cluster that mediates the biosynthesis of ilicicolin H, a 4-hydroxy-2-pyridonealkaloid that has potent and broad antifungal activities by inhibiting the mitochondrial respiration chain. IliC catalyzes the ring expansion of the tetramate intermediate to the acyclic 2-pyridone intermediate that contains the trans bis-diene chain. The biosynthesis of ilicicolin H starts with formation of the tetramic acid by the hybrid PKS-NRPS synthetase iliA with the partnering trans-enoyl reductase iliB since iliA lacks a designated enoylreductase (ER) domain. The cytochrome P450 monooxygenase iliC then catalyzes the ring expansion of the tetramate to the acyclic 2-pyridone. The pericyclase iliD further converts the acyclic 2-pyridone into 8-epi-ilicicolin H. 8-epi-ilicicolin H might then spontaneously convert to ilicicolin H since ilicicolin H is produced in the absence of the epimerase iliE, in contrast to what was observed for the Talaromyces variabilis ilicolin H biosynthetic pathway. This Hypocrea jecorina (strain QM6a) (Trichoderma reesei) protein is Cytochrome P450 monooxygenase iliC.